We begin with the raw amino-acid sequence, 197 residues long: TLE family member 5 (197 aa).

The tract at residues 166–197 is CCN domain; the sequence is LSALGSQAHLSKEDKNGHDGDTHQEDDGEKSD. The disordered stretch occupies residues 174–197; sequence HLSKEDKNGHDGDTHQEDDGEKSD. Basic and acidic residues predominate over residues 175-197; it reads LSKEDKNGHDGDTHQEDDGEKSD. Ser-196 bears the Phosphoserine mark.

Belongs to the WD repeat Groucho/TLE family. Homooligomer and heterooligomer with other family members. Binds TCF7. Binds the NF-kappa-B subunit RELA. Interacts with PHF12. Interacts (via Q domain) with SIX3. Interacts with SIX6. Post-translationally, ubiquitinated by XIAP/BIRC4. In terms of tissue distribution, found predominantly in muscle, heart and Placenta. In fetal tissues, abundantly expressed in the heart, lung, kidney, brain and liver.

Its subcellular location is the nucleus. Functionally, transcriptional corepressor. Acts as a dominant repressor towards other family members. Inhibits NF-kappa-B-regulated gene expression. May be required for the initiation and maintenance of the differentiated state. Essential for the transcriptional repressor activity of SIX3 during retina and lens development. This chain is TLE family member 5, found in Homo sapiens (Human).